A 504-amino-acid chain; its full sequence is Maturase K (504 aa).

This sequence belongs to the intron maturase 2 family. MatK subfamily.

The protein localises to the plastid. It is found in the chloroplast. Usually encoded in the trnK tRNA gene intron. Probably assists in splicing its own and other chloroplast group II introns. The chain is Maturase K from Quercus cerris (Turkey oak).